A 165-amino-acid chain; its full sequence is Phosphopantetheine adenylyltransferase (165 aa).

Substrate is bound at residue T10. Residues T10–F11 and H18 contribute to the ATP site. Substrate is bound by residues K42, L74, and R88. ATP contacts are provided by residues G89–R91, E99, and N124–S130.

This sequence belongs to the bacterial CoaD family. In terms of assembly, homohexamer. Mg(2+) serves as cofactor.

It is found in the cytoplasm. It carries out the reaction (R)-4'-phosphopantetheine + ATP + H(+) = 3'-dephospho-CoA + diphosphate. It participates in cofactor biosynthesis; coenzyme A biosynthesis; CoA from (R)-pantothenate: step 4/5. In terms of biological role, reversibly transfers an adenylyl group from ATP to 4'-phosphopantetheine, yielding dephospho-CoA (dPCoA) and pyrophosphate. The polypeptide is Phosphopantetheine adenylyltransferase (Helicobacter hepaticus (strain ATCC 51449 / 3B1)).